Consider the following 506-residue polypeptide: CDK5 regulatory subunit-associated protein 3 (506 aa).

3 consecutive short sequence motifs (shuffled ATG8-binding motif) follow at residues 267–270, 292–295, and 310–313; these read IDWG. The tract at residues 269-506 is required for interaction with UFL1 and mediates interaction with CHEK1; that stretch reads WGDFGVEAVS…RPVNLMGTSL (238 aa). Positions 355–370 are RPL10a-binding domain (RBD); sequence DELMELEIFLARRAVE. Lys-450 participates in a covalent cross-link: Glycyl lysine isopeptide (Lys-Gly) (interchain with G-Cter in SUMO2).

Belongs to the CDK5RAP3 family. As to quaternary structure, substrate adapter component of the UFM1 ribosome E3 ligase (UREL) complex, composed of UFL1, DDRGK1 and CDK5RAP3. Interaction with UFL1 anchors CDK5RAP3 in the cytoplasm, preventing its translocation to the nucleus which allows expression of the CCND1 cyclin and progression of cells through the G1/S transition. Interacts with ATG8 family proteins MAP1LC3A, MAP1LC3B, GABARAP, GABARAPL1 and GABARAPL2. Interacts with CDK5R1; competes with CDK5RAP1 and CDK5RAP2. Interacts with RELA. Interacts with CHEK1; may negatively regulate CHEK1 and thereby stimulate entry into mitosis. Interacts with CDKN2A/ARF and MDM2; forms a ternary complex involved in regulation of p53/TP53. Interacts with MAPK14. Interacts with CCNB1. Interacts with TUBG1; may regulate CDK5RAP3 in mitotic G2/M transition checkpoint. Post-translationally, may be phosphorylated by CDK5. Ubiquitinated. Probably triggers proteasomal degradation and is negatively regulated by UFL1. In terms of processing, may be ufmylated. Post-translationally, cleaved by caspases early during apoptosis, the resulting peptides may play a role in rupture of the nuclear envelope.

The protein localises to the endoplasmic reticulum membrane. It localises to the cytoplasm. Its subcellular location is the nucleus. The protein resides in the cytoskeleton. It is found in the microtubule organizing center. The protein localises to the centrosome. In terms of biological role, substrate adapter of E3 ligase complexes mediating ufmylation, the covalent attachment of the ubiquitin-like modifier UFM1 to substrate proteins, and which is involved in various processes, such as ribosome recycling and reticulophagy (also called ER-phagy). As part of the UREL complex, plays a key role in ribosome recycling by promoting mono-ufmylation of RPL26/uL24 subunit of the 60S ribosome. Ufmylation of RPL26/uL24 occurs on free 60S ribosomes following ribosome dissociation: it weakens the junction between post-termination 60S subunits and SEC61 translocons, promoting release and recycling of the large ribosomal subunit from the endoplasmic reticulum membrane. Ufmylation of RPL26/uL24 and subsequent 60S ribosome recycling either take place after normal termination of translation or after ribosome stalling during cotranslational translocation at the endoplasmic reticulum. Within the UREL complex, CDK5RAP3 acts as a substrate adapter that constrains UFL1 ligase activity to mono-ufmylate RPL26/uL24 at 'Lys-134'. The UREL complex is also involved in reticulophagy in response to endoplasmic reticulum stress by promoting ufmylation of proteins such as CYB5R3, thereby promoting lysosomal degradation of ufmylated proteins. Also acts as a regulator of transcription: negatively regulates NF-kappa-B-mediated gene transcription through the control of RELA phosphorylation. Also regulates mitotic G2/M transition checkpoint and mitotic G2 DNA damage checkpoint. Through its interaction with CDKN2A/ARF and MDM2 may induce MDM2-dependent p53/TP53 ubiquitination, stabilization and activation in the nucleus, thereby promoting G1 cell cycle arrest and inhibition of cell proliferation. May also play a role in the rupture of the nuclear envelope during apoptosis. May regulate MAPK14 activity by regulating its dephosphorylation by PPM1D/WIP1. Required for liver development. In Pongo abelii (Sumatran orangutan), this protein is CDK5 regulatory subunit-associated protein 3.